Reading from the N-terminus, the 259-residue chain is MEPPGEKPGEAEALSITPQLLKSHSGEFALDSILLLKLRGLGVVDLGCLGECLNLEWLDLSGNALTHLGPLASLRQLAVLNVSNNRLTGLEPLAACENLQSLNAAGNLLTTPGQLQCLAGLQALEHLRLRDPLARLSNPLCANASYWAVVRELLPGLKVIDGERVSGRGSELYQLCRDLDSSLRSGSSPGPRAIEAQPWVEPGYWESWPIRSSSILEEACRQFQDTLQECLDLDRQASDSLAQAQQALSPAETTSSFVF.

LRR repeat units lie at residues 54 to 75 (NLEWLDLSGNALTHLGPLASLR), 76 to 97 (QLAVLNVSNNRLTGLEPLAACE), and 98 to 119 (NLQSLNAAGNLLTTPGQLQCLA). The 41-residue stretch at 138–178 (NPLCANASYWAVVRELLPGLKVIDGERVSGRGSELYQLCRD) folds into the LRRCT domain.

The sequence is that of Leucine-rich repeat-containing protein 61 (Lrrc61) from Mus musculus (Mouse).